The following is a 142-amino-acid chain: Large ribosomal subunit protein uL11 (142 aa).

This sequence belongs to the universal ribosomal protein uL11 family. As to quaternary structure, part of the ribosomal stalk of the 50S ribosomal subunit. Interacts with L10 and the large rRNA to form the base of the stalk. L10 forms an elongated spine to which L12 dimers bind in a sequential fashion forming a multimeric L10(L12)X complex. Post-translationally, one or more lysine residues are methylated.

In terms of biological role, forms part of the ribosomal stalk which helps the ribosome interact with GTP-bound translation factors. This is Large ribosomal subunit protein uL11 from Proteus mirabilis (strain HI4320).